The chain runs to 273 residues: Nitrogenase iron protein (273 aa).

Residue 8 to 15 (GKGGIGKS) coordinates ATP. C95 is a [4Fe-4S] cluster binding site. Residue R98 is modified to ADP-ribosylarginine; by dinitrogenase reductase ADP-ribosyltransferase. C130 contributes to the [4Fe-4S] cluster binding site.

The protein belongs to the NifH/BchL/ChlL family. As to quaternary structure, homodimer. It depends on [4Fe-4S] cluster as a cofactor. Post-translationally, the reversible ADP-ribosylation of Arg-98 inactivates the nitrogenase reductase and regulates nitrogenase activity.

The catalysed reaction is N2 + 8 reduced [2Fe-2S]-[ferredoxin] + 16 ATP + 16 H2O = H2 + 8 oxidized [2Fe-2S]-[ferredoxin] + 2 NH4(+) + 16 ADP + 16 phosphate + 6 H(+). In terms of biological role, the key enzymatic reactions in nitrogen fixation are catalyzed by the nitrogenase complex, which has 2 components: the iron protein and the molybdenum-iron protein. This chain is Nitrogenase iron protein, found in Roseiflexus sp. (strain RS-1).